Consider the following 456-residue polypeptide: Mitochondrial import inner membrane translocase subunit TIM50 (456 aa).

Residues 1–22 (MSLSKLSQKCFSRHHARTFIRF) constitute a mitochondrion transit peptide. The Mitochondrial matrix segment spans residues 23–171 (SSSDFQSLLG…RRKRMERNTR (149 aa)). 2 disordered regions span residues 101–120 (ETEK…AIDE) and 132–165 (EEAA…RRKR). Over residues 137 to 153 (SKTSAPSGSSGDNNDQP) the composition is skewed to polar residues. Residues 172–192 (IGGYVLLGGSVIGFISFCFYY) traverse the membrane as a helical segment. Residues 193–456 (GRAQRDEAGN…LFGFRRHASA (264 aa)) are Mitochondrial intermembrane-facing. Positions 247-391 (YLQPKYTIVI…VDLAELLKTI (145 aa)) constitute an FCP1 homology domain.

Belongs to the TIM50 family. As to quaternary structure, component of the TIM23 complex at least composed of tim-23, tim-17 and tim-50.

It is found in the mitochondrion inner membrane. Functionally, essential component of the TIM23 complex, a complex that mediates the translocation of transit peptide-containing proteins across the mitochondrial inner membrane. This is Mitochondrial import inner membrane translocase subunit TIM50 (scpl-4) from Caenorhabditis briggsae.